The primary structure comprises 273 residues: 4-hydroxy-tetrahydrodipicolinate reductase (273 aa).

NAD(+)-binding positions include 8 to 13, glutamate 34, 102 to 104, and 128 to 131; these read GAAGRM, GTT, and SSNM. Residue histidine 160 is the Proton donor/acceptor of the active site. Position 161 (histidine 161) interacts with (S)-2,3,4,5-tetrahydrodipicolinate. Lysine 164 functions as the Proton donor in the catalytic mechanism. 170-171 provides a ligand contact to (S)-2,3,4,5-tetrahydrodipicolinate; that stretch reads GT.

This sequence belongs to the DapB family.

It is found in the cytoplasm. The enzyme catalyses (S)-2,3,4,5-tetrahydrodipicolinate + NAD(+) + H2O = (2S,4S)-4-hydroxy-2,3,4,5-tetrahydrodipicolinate + NADH + H(+). The catalysed reaction is (S)-2,3,4,5-tetrahydrodipicolinate + NADP(+) + H2O = (2S,4S)-4-hydroxy-2,3,4,5-tetrahydrodipicolinate + NADPH + H(+). Its pathway is amino-acid biosynthesis; L-lysine biosynthesis via DAP pathway; (S)-tetrahydrodipicolinate from L-aspartate: step 4/4. Catalyzes the conversion of 4-hydroxy-tetrahydrodipicolinate (HTPA) to tetrahydrodipicolinate. In Methanobrevibacter smithii (strain ATCC 35061 / DSM 861 / OCM 144 / PS), this protein is 4-hydroxy-tetrahydrodipicolinate reductase.